The following is a 568-amino-acid chain: DNA ligase 2 (568 aa).

ATP is bound at residue Glu254. Residue Lys256 is the N6-AMP-lysine intermediate of the active site. Residues Arg261, Arg276, Glu306, Phe346, Arg425, and Lys431 each contribute to the ATP site.

Belongs to the ATP-dependent DNA ligase family. Requires Mg(2+) as cofactor.

It carries out the reaction ATP + (deoxyribonucleotide)n-3'-hydroxyl + 5'-phospho-(deoxyribonucleotide)m = (deoxyribonucleotide)n+m + AMP + diphosphate.. Its function is as follows. DNA ligase that seals nicks in double-stranded DNA during DNA replication, DNA recombination and DNA repair. The polypeptide is DNA ligase 2 (Methanosarcina acetivorans (strain ATCC 35395 / DSM 2834 / JCM 12185 / C2A)).